Reading from the N-terminus, the 151-residue chain is Large ribosomal subunit protein uL13 (151 aa).

This sequence belongs to the universal ribosomal protein uL13 family. As to quaternary structure, part of the 50S ribosomal subunit.

Functionally, this protein is one of the early assembly proteins of the 50S ribosomal subunit, although it is not seen to bind rRNA by itself. It is important during the early stages of 50S assembly. This is Large ribosomal subunit protein uL13 from Mycoplasma mycoides subsp. mycoides SC (strain CCUG 32753 / NCTC 10114 / PG1).